The primary structure comprises 64 residues: H/ACA ribonucleoprotein complex subunit 3-like protein (64 aa).

The protein belongs to the NOP10 family. As to quaternary structure, component of the small nucleolar ribonucleoprotein particles containing H/ACA-type snoRNAs (H/ACA snoRNPs).

It is found in the nucleus. Its subcellular location is the nucleolus. Its function is as follows. Required for ribosome biogenesis. Part of a complex which catalyzes pseudouridylation of rRNA. This involves the isomerization of uridine such that the ribose is subsequently attached to C5, instead of the normal N1. Pseudouridine ('psi') residues may serve to stabilize the conformation of rRNAs. In Arabidopsis thaliana (Mouse-ear cress), this protein is H/ACA ribonucleoprotein complex subunit 3-like protein.